Consider the following 421-residue polypeptide: MYLMCVSLNYHQLPLDLREKFSFTKEEVPKADKLLNDEKSILENLLISTCNRTEVYAVVDQIHTGRYYIRRFLAEWFHYTIDDFTKFVTVTTKDAVAEHLFKVITGLDSLIKGEPQILGQMKDAFQIATKEGTTGAILNHLFRQAITFSKRMHTKYRVSELAQSSGQAGLHQIKMQFGSLEGKTLAVVGLGQIGKHTAYNASNMGFSKVLLLNRTDSKAEQIATELQGVVEARPFNQLATVVHNVDAAIFAATVKQPLFKADEQISTMIVDLGVPRNVAVNSTKLKYYDVDHVHMILNSNDEKRRLMIQKIANEIPQEVNDFYIWEKQLHIVPVIRGLREHSLRIEGEAYDSLLRKLPELDSHERKVISKHMKSIVNQMIKGPIKEIKELSVTPGATADIDFFCKIFGMDNLKVENQNNDK.

Substrate contacts are provided by residues threonine 49–arginine 52, serine 109, glutamate 114–glutamine 116, and glutamine 120. Cysteine 50 functions as the Nucleophile in the catalytic mechanism. Glycine 189–glycine 194 contacts NADP(+).

It belongs to the glutamyl-tRNA reductase family. Homodimer.

It carries out the reaction (S)-4-amino-5-oxopentanoate + tRNA(Glu) + NADP(+) = L-glutamyl-tRNA(Glu) + NADPH + H(+). It functions in the pathway porphyrin-containing compound metabolism; protoporphyrin-IX biosynthesis; 5-aminolevulinate from L-glutamyl-tRNA(Glu): step 1/2. Its function is as follows. Catalyzes the NADPH-dependent reduction of glutamyl-tRNA(Glu) to glutamate 1-semialdehyde (GSA). The sequence is that of Glutamyl-tRNA reductase from Limosilactobacillus reuteri (strain DSM 20016) (Lactobacillus reuteri).